Consider the following 1592-residue polypeptide: ABC transporter ATP-binding protein/permease VMR1 (1592 aa).

At 1–33 the chain is on the vacuolar side; sequence MGTDPLIIRNNGSFWEVDDFTRLGRTQLLSYYL. N11 is a glycosylation site (N-linked (GlcNAc...) asparagine). A helical membrane pass occupies residues 34-54; that stretch reads PLAIIASIGIFALCRSGLSRY. Over 55 to 74 the chain is Cytoplasmic; the sequence is VRSAECDLVNEYLFGAQEER. The chain crosses the membrane as a helical span at residues 75–95; that stretch reads KEDNSIERLLRNSNTQANYVN. Topologically, residues 96 to 100 are vacuolar; the sequence is VKKQG. A helical membrane pass occupies residues 101-121; it reads RILKLRHFDITTIDVKQIDAK. The Cytoplasmic segment spans residues 122–131; that stretch reads NHGGLTFSRP. A helical transmembrane segment spans residues 132-152; that stretch reads STSDHLRKSSEIVLMSLQIIG. Residues 153–170 are Vacuolar-facing; the sequence is LSFLRVTKINIELTNRDV. The chain crosses the membrane as a helical span at residues 171–191; the sequence is TTLLLFWLILLSLSILRVYKR. At 192-329 the chain is on the cytoplasmic side; that stretch reads STNLWAICFT…NKHINNLTLA (138 aa). A helical transmembrane segment spans residues 330-350; the sequence is LFESFKTYLLIGMLWVLVNSI. The ABC transmembrane type-1 1 domain maps to 338–632; sequence LLIGMLWVLV…LSNMLSFINQ (295 aa). Topologically, residues 351–379 are vacuolar; that stretch reads VNLLPTILMKRFLEIVDNPNRSSSCMNLA. N-linked (GlcNAc...) asparagine glycosylation is present at N370. The helical transmembrane segment at 380 to 400 threads the bilayer; it reads WLYIIGMFICRLTLAICNSQG. Topologically, residues 401–465 are cytoplasmic; that stretch reads QFVSDKICLR…SFKVSELANY (65 aa). The helical transmembrane segment at 466 to 486 threads the bilayer; sequence LYVTVQAVIMIIVVVGLLFNF. Topologically, residues 487 to 489 are vacuolar; that stretch reads LGV. The chain crosses the membrane as a helical span at residues 490-510; sequence SAFAGISIILVMFPLNFLLAN. At 511–572 the chain is on the cytoplasmic side; sequence LLGKFQKQTL…SLLKKSLVWS (62 aa). Residues 573 to 593 form a helical membrane-spanning segment; that stretch reads VTSFLWFVTPTLVTGVTFAIC. Residues 594–614 are Vacuolar-facing; sequence TFVQHEDLNAPLAFTTLSLFT. The helical transmembrane segment at 615–635 threads the bilayer; sequence LLKTPLDQLSNMLSFINQSKV. At 636 to 989 the chain is on the cytoplasmic side; sequence SLKRISDFLR…ALTALFALYI (354 aa). Residues 664 to 908 form the ABC transporter 1 domain; that stretch reads IEFKNATLTW…GLFKEKYVQL (245 aa). 702-709 is a binding site for ATP; that stretch reads GSTGSGKS. The ABC transmembrane type-1 2 domain maps to 981-1282; it reads LTALFALYIT…LVRLYSTFEM (302 aa). A helical transmembrane segment spans residues 990-1010; it reads TAQILFISQSWWIRHWVNDTN. Topologically, residues 1011-1051 are vacuolar; that stretch reads VRINAPGFAMDTLPLKGMTDSSKNKHNAFYYLTVYFLIGII. Residues 1052–1072 traverse the membrane as a helical segment; sequence QAMLGGFKTMMTFLSGMRASR. The Cytoplasmic segment spans residues 1073–1115; the sequence is KIFNNLLDLVLHAQIRFFDVTPVGRIMNRFSKDIEGVDQELIP. Residues 1116–1136 form a helical membrane-spanning segment; it reads YLEVTIFCLIQCASIIFLITV. I1137 is a topological domain (vacuolar). A helical transmembrane segment spans residues 1138–1158; sequence TPRFLTVAVIVFVLYFFVGKW. At 1159 to 1229 the chain is on the cytoplasmic side; that stretch reads YLTASRELKR…VTVKWFSFRV (71 aa). A helical membrane pass occupies residues 1230–1250; sequence DMIGAFIVLASGSFILLNIAN. Topologically, residues 1251 to 1252 are vacuolar; the sequence is ID. The chain crosses the membrane as a helical span at residues 1253 to 1273; the sequence is SGLAGISLTYAILFTDGALWL. Topologically, residues 1274 to 1592 are cytoplasmic; sequence VRLYSTFEMN…IAKQSSKMMK (319 aa). Residues 1323-1572 form the ABC transporter 2 domain; sequence IEIENLSLRY…ERGIFYSMCR (250 aa). ATP is bound at residue 1357–1364; sequence GRTGAGKS.

This sequence belongs to the ABC transporter superfamily. ABC transporter which may be involved in multidrug resistance.

The protein localises to the vacuole membrane. The protein is ABC transporter ATP-binding protein/permease VMR1 (VMR1) of Saccharomyces cerevisiae (strain ATCC 204508 / S288c) (Baker's yeast).